A 285-amino-acid polypeptide reads, in one-letter code: Probable endonuclease 4 (285 aa).

Residues His-69, His-109, Glu-145, Asp-179, His-182, His-216, Asp-229, His-231, and Glu-261 each coordinate Zn(2+).

It belongs to the AP endonuclease 2 family. Requires Zn(2+) as cofactor.

It carries out the reaction Endonucleolytic cleavage to 5'-phosphooligonucleotide end-products.. Its function is as follows. Endonuclease IV plays a role in DNA repair. It cleaves phosphodiester bonds at apurinic or apyrimidinic (AP) sites, generating a 3'-hydroxyl group and a 5'-terminal sugar phosphate. The protein is Probable endonuclease 4 of Salmonella arizonae (strain ATCC BAA-731 / CDC346-86 / RSK2980).